The primary structure comprises 87 residues: Acyl-CoA-binding protein (87 aa).

Positions 2-87 (VSQLFEEKAK…VDQLIAKYSS (86 aa)) constitute an ACB domain. An acyl-CoA is bound by residues 29 to 33 (YALYK), K51, and K55. K51 is covalently cross-linked (Glycyl lysine isopeptide (Lys-Gly) (interchain with G-Cter in ubiquitin)). Residue K72 forms a Glycyl lysine isopeptide (Lys-Gly) (interchain with G-Cter in ubiquitin) linkage. Y74 lines the an acyl-CoA pocket.

It belongs to the ACBP family.

Its function is as follows. Binds medium- and long-chain acyl-CoA esters with very high affinity and may function as an intracellular carrier of acyl-CoA esters. Enhances the in vitro activity of the ceramide synthase complex. In Saccharomyces cerevisiae (strain ATCC 204508 / S288c) (Baker's yeast), this protein is Acyl-CoA-binding protein (ACB1).